The sequence spans 236 residues: 2-C-methyl-D-erythritol 4-phosphate cytidylyltransferase (236 aa).

Belongs to the IspD/TarI cytidylyltransferase family. IspD subfamily.

It catalyses the reaction 2-C-methyl-D-erythritol 4-phosphate + CTP + H(+) = 4-CDP-2-C-methyl-D-erythritol + diphosphate. The protein operates within isoprenoid biosynthesis; isopentenyl diphosphate biosynthesis via DXP pathway; isopentenyl diphosphate from 1-deoxy-D-xylulose 5-phosphate: step 2/6. Catalyzes the formation of 4-diphosphocytidyl-2-C-methyl-D-erythritol from CTP and 2-C-methyl-D-erythritol 4-phosphate (MEP). The protein is 2-C-methyl-D-erythritol 4-phosphate cytidylyltransferase of Pseudomonas savastanoi pv. phaseolicola (strain 1448A / Race 6) (Pseudomonas syringae pv. phaseolicola (strain 1448A / Race 6)).